We begin with the raw amino-acid sequence, 125 residues long: Putative superoxide reductase (125 aa).

Fe cation is bound by residues Glu12, His14, His40, His46, Cys110, and His113.

It belongs to the desulfoferrodoxin family. Fe cation is required as a cofactor.

The catalysed reaction is reduced [rubredoxin] + superoxide + 2 H(+) = oxidized [rubredoxin] + H2O2. Uses electrons from reduced NADP, by way of rubredoxin and an oxidoreductase, to catalyze the reduction of superoxide to hydrogen peroxide. This chain is Putative superoxide reductase, found in Archaeoglobus fulgidus (strain ATCC 49558 / DSM 4304 / JCM 9628 / NBRC 100126 / VC-16).